We begin with the raw amino-acid sequence, 326 residues long: DNA-directed RNA polymerase subunit alpha (326 aa).

An alpha N-terminal domain (alpha-NTD) region spans residues 1–232 (MQSATEFLKP…SQLSVFADLE (232 aa)). An alpha C-terminal domain (alpha-CTD) region spans residues 246–326 (VDPLLLRPVD…NWPPAGLERP (81 aa)).

The protein belongs to the RNA polymerase alpha chain family. Homodimer. The RNAP catalytic core consists of 2 alpha, 1 beta, 1 beta' and 1 omega subunit. When a sigma factor is associated with the core the holoenzyme is formed, which can initiate transcription.

It carries out the reaction RNA(n) + a ribonucleoside 5'-triphosphate = RNA(n+1) + diphosphate. DNA-dependent RNA polymerase catalyzes the transcription of DNA into RNA using the four ribonucleoside triphosphates as substrates. In Thiobacillus denitrificans (strain ATCC 25259 / T1), this protein is DNA-directed RNA polymerase subunit alpha.